A 625-amino-acid chain; its full sequence is Endoglucanase 13 (625 aa).

The first 34 residues, methionine 1 to alanine 34, serve as a signal peptide directing secretion. Aspartate 91 serves as the catalytic Nucleophile. Residue histidine 427 is part of the active site. An N-linked (GlcNAc...) asparagine glycan is attached at asparagine 440. Catalysis depends on residues aspartate 479 and glutamate 488. The segment at alanine 509–proline 530 is disordered.

Belongs to the glycosyl hydrolase 9 (cellulase E) family. In terms of tissue distribution, expressed in roots and flowers.

The protein resides in the secreted. The enzyme catalyses Endohydrolysis of (1-&gt;4)-beta-D-glucosidic linkages in cellulose, lichenin and cereal beta-D-glucans.. The sequence is that of Endoglucanase 13 (GLU6) from Oryza sativa subsp. japonica (Rice).